A 512-amino-acid chain; its full sequence is V-type proton ATPase subunit B (512 aa).

Arg-381 contacts ATP. The segment at 484 to 512 (LYGRDREQDDDEDEDEEDPDKSGDKLIDA) is disordered. Residues 491–502 (QDDDEDEDEEDP) show a composition bias toward acidic residues. Residues 503–512 (DKSGDKLIDA) show a composition bias toward basic and acidic residues.

This sequence belongs to the ATPase alpha/beta chains family. V-ATPase is a heteromultimeric enzyme composed of a peripheral catalytic V1 complex (components A to H) attached to an integral membrane V0 proton pore complex (components: a, c, c', c'', d, e, f and VOA1).

It localises to the vacuole membrane. In terms of biological role, non-catalytic subunit of the V1 complex of vacuolar(H+)-ATPase (V-ATPase), a multisubunit enzyme composed of a peripheral complex (V1) that hydrolyzes ATP and a membrane integral complex (V0) that translocates protons. Plays an important role in resistance to several stresses, as well as in autophagy and virulence. The protein is V-type proton ATPase subunit B of Candida albicans (strain SC5314 / ATCC MYA-2876) (Yeast).